The primary structure comprises 468 residues: MMAAVDAILAGKYPAKAHARRVAESLQSYRNGCPGIVYLEAQKTRLIEDNDEPAPFRQRRPFFYLSGCPLPDSCLVYDLSEDQLTLFIPPVDPEDVIWSGLPMSTEEAQNQYDVDRVLVTTELNSTLASIVSSHGGKAIAFTIADQVSESTQFHGFSEVNHSVLKGVIEQSRVVKDEYEVALLRKANDISAKAHIAAIKASQTAVNEREIEGAFIATCIANGAREQSYHPIVACGENGATLHYGKNDDTLIDPVTNQKKRNVLIDAGGEYRTYCADITRVIPVGGKFTAETRQIYDIVLQMQTECIAMLKEGVQWEDVHAHAHRVAIRGLLKLGILRGAEDEIFEKRVSVAFFPHGLGHYLGMDTHDTGGNPNYADKDTMFRYLRVRGRLPAGSVITVEPGVYFCRFIIEPYIKSPESNKYIDTNVLDRYWRVGGVRIEDNVLVTKDGYDNLTTAPKAVDELERLAAS.

4 residues coordinate Mn(2+): aspartate 265, aspartate 276, glutamate 399, and glutamate 439.

Belongs to the peptidase M24B family. Mn(2+) is required as a cofactor.

The catalysed reaction is Release of any N-terminal amino acid, including proline, that is linked to proline, even from a dipeptide or tripeptide.. Functionally, catalyzes the removal of a penultimate prolyl residue from the N-termini of peptides. The protein is Probable Xaa-Pro aminopeptidase pepP (pepP) of Aspergillus fumigatus (strain CBS 144.89 / FGSC A1163 / CEA10) (Neosartorya fumigata).